Consider the following 145-residue polypeptide: D-aminoacyl-tRNA deacylase (145 aa).

Residues glycine 137–proline 138 carry the Gly-cisPro motif, important for rejection of L-amino acids motif.

The protein belongs to the DTD family. Homodimer.

The protein localises to the cytoplasm. It catalyses the reaction glycyl-tRNA(Ala) + H2O = tRNA(Ala) + glycine + H(+). The enzyme catalyses a D-aminoacyl-tRNA + H2O = a tRNA + a D-alpha-amino acid + H(+). An aminoacyl-tRNA editing enzyme that deacylates mischarged D-aminoacyl-tRNAs. Also deacylates mischarged glycyl-tRNA(Ala), protecting cells against glycine mischarging by AlaRS. Acts via tRNA-based rather than protein-based catalysis; rejects L-amino acids rather than detecting D-amino acids in the active site. By recycling D-aminoacyl-tRNA to D-amino acids and free tRNA molecules, this enzyme counteracts the toxicity associated with the formation of D-aminoacyl-tRNA entities in vivo and helps enforce protein L-homochirality. The chain is D-aminoacyl-tRNA deacylase from Psychromonas ingrahamii (strain DSM 17664 / CCUG 51855 / 37).